The following is a 142-amino-acid chain: Deoxyuridine 5'-triphosphate nucleotidohydrolase (142 aa).

Residues 62 to 64 (RSG), asparagine 75, and 79 to 81 (TID) each bind substrate.

It belongs to the dUTPase family. Requires Mg(2+) as cofactor.

It carries out the reaction dUTP + H2O = dUMP + diphosphate + H(+). It functions in the pathway pyrimidine metabolism; dUMP biosynthesis; dUMP from dCTP (dUTP route): step 2/2. This enzyme is involved in nucleotide metabolism: it produces dUMP, the immediate precursor of thymidine nucleotides and it decreases the intracellular concentration of dUTP so that uracil cannot be incorporated into DNA. The protein is Deoxyuridine 5'-triphosphate nucleotidohydrolase of Clostridium novyi (strain NT).